We begin with the raw amino-acid sequence, 417 residues long: Gamma-glutamyl phosphate reductase (417 aa).

This sequence belongs to the gamma-glutamyl phosphate reductase family.

Its subcellular location is the cytoplasm. The catalysed reaction is L-glutamate 5-semialdehyde + phosphate + NADP(+) = L-glutamyl 5-phosphate + NADPH + H(+). It functions in the pathway amino-acid biosynthesis; L-proline biosynthesis; L-glutamate 5-semialdehyde from L-glutamate: step 2/2. Functionally, catalyzes the NADPH-dependent reduction of L-glutamate 5-phosphate into L-glutamate 5-semialdehyde and phosphate. The product spontaneously undergoes cyclization to form 1-pyrroline-5-carboxylate. The polypeptide is Gamma-glutamyl phosphate reductase (Photorhabdus laumondii subsp. laumondii (strain DSM 15139 / CIP 105565 / TT01) (Photorhabdus luminescens subsp. laumondii)).